Here is a 670-residue protein sequence, read N- to C-terminus: MTREEARRRINELRDLIRYHNYRYYVLADPEISDAEYDRLLRELKELEERFPEFKSPDSPTEQVGARPLEPTFRPVRHPTRMYSLDNAFTYEEVLAFEERLERALGRKRPFLYTVEHKVDGLSVNLYYEEGVLVFGATRGDGEVGEEVTQNLLTIPTIPRRLKGVPDRLEVRGEVYMPIEAFLRLNEELEERGEKVFKNPRNAAAGSLRQKDPRVTAKRGLRATFYALGLGLEESGLKSQYELLLWLKEKGFPVEHGYEKALGAEGVEEVYRRFLAQRHALPFEADGVVVKLDDLALWRELGYTARAPRFALAYKFPAEEKETRLLDVVFQVGRTGRVTPVGVLEPVFIEGSEVSRVTLHNESYIEELDIRIGDWVLVHKAGGVIPEVLRVLKERRTGEERPIRWPETCPECGHRLVKEGKVHRCPNPLCPAKRFEAIRHYASRKAMDIEGLGEKLIERLLEKGLVRDVADLYHLRKEDLLGLERMGEKSAQNLLRQIEESKHRGLERLLYALGLPGVGEVLARNLARRFGTMDRLLEASLEELLEVEEVGELTARAILETLKDPAFRDLVRRLKEAGVSMESKEEVSDLLSGLTFVLTGELSRPREEVKALLQRLGAKVTDSVSRKTSYLVVGENPGSKLEKARALGVAVLTEEEFWRFLKEKGAPVPA.

NAD(+) is bound by residues 34-38 (DAEYD), 84-85 (SL), 116-119 (EHKV), Arg-139, Glu-174, Tyr-226, Lys-291, and Lys-315. Lys-118 functions as the N6-AMP-lysine intermediate in the catalytic mechanism. Positions 409, 412, 425, and 430 each coordinate Zn(2+). Residues 586 to 670 (EVSDLLSGLT…LKEKGAPVPA (85 aa)) enclose the BRCT domain.

It belongs to the NAD-dependent DNA ligase family. LigA subfamily. Mg(2+) serves as cofactor.

It catalyses the reaction NAD(+) + (deoxyribonucleotide)n-3'-hydroxyl + 5'-phospho-(deoxyribonucleotide)m = (deoxyribonucleotide)n+m + AMP + beta-nicotinamide D-nucleotide.. In terms of biological role, DNA ligase that catalyzes the formation of phosphodiester linkages between 5'-phosphoryl and 3'-hydroxyl groups in double-stranded DNA using NAD as a coenzyme and as the energy source for the reaction. It is essential for DNA replication and repair of damaged DNA. The chain is DNA ligase from Thermus filiformis.